The following is a 503-amino-acid chain: Glycerol kinase (503 aa).

Residue Thr-14 coordinates ADP. ATP-binding residues include Thr-14, Thr-15, and Ser-16. Thr-14 is a sn-glycerol 3-phosphate binding site. Residue Arg-18 coordinates ADP. Sn-glycerol 3-phosphate is bound by residues Arg-84, Glu-85, Tyr-136, and Asp-246. Arg-84, Glu-85, Tyr-136, Asp-246, and Gln-247 together coordinate glycerol. Thr-268 and Gly-311 together coordinate ADP. Thr-268, Gly-311, Gln-315, and Gly-412 together coordinate ATP. The ADP site is built by Gly-412 and Asn-416.

This sequence belongs to the FGGY kinase family.

The catalysed reaction is glycerol + ATP = sn-glycerol 3-phosphate + ADP + H(+). Its pathway is polyol metabolism; glycerol degradation via glycerol kinase pathway; sn-glycerol 3-phosphate from glycerol: step 1/1. Its activity is regulated as follows. Inhibited by fructose 1,6-bisphosphate (FBP). Its function is as follows. Key enzyme in the regulation of glycerol uptake and metabolism. Catalyzes the phosphorylation of glycerol to yield sn-glycerol 3-phosphate. This Haemophilus influenzae (strain PittEE) protein is Glycerol kinase.